The sequence spans 561 residues: TBC1 domain family member 24 (561 aa).

Positions 36 and 40 each coordinate a 1,2-diacyl-sn-glycero-3-phospho-(1D-myo-inositol). Residues 45–236 (AQSHTLRGKV…RVFDVFLVEG (192 aa)) enclose the Rab-GAP TBC domain. Residues Lys238, Arg242, and 293–297 (RLFSR) each bind a 1,2-diacyl-sn-glycero-3-phospho-(1D-myo-inositol). One can recognise a TLDc domain in the interval 343-556 (EIVSVKEMRD…IAAVEAWGFQ (214 aa)). Phosphoserine is present on residues Ser475 and Ser482.

As to quaternary structure, interacts with ARF6. In terms of tissue distribution, expressed in brain, particularly at the level of the cortex and the hippocampus. Expressed in the inner ear in spiral ganglion cells, a collection of neurons critical for hearing and balance.

The protein resides in the cell membrane. It localises to the cytoplasm. The protein localises to the cytoplasmic vesicle membrane. It is found in the presynapse. Functionally, may act as a GTPase-activating protein for Rab family protein(s). Involved in neuronal projections development, probably through a negative modulation of ARF6 function. Involved in the regulation of synaptic vesicle trafficking. The protein is TBC1 domain family member 24 (Tbc1d24) of Mus musculus (Mouse).